The following is a 253-amino-acid chain: MKFTVIIPARYASSRLPGKPLLDINGYPMIQYVWQKAQQAGANRVIIATDHPQIQTVAKAFGAEVCMTSDQHQSGTERLAEVVAKMAIADQEIIVNVQGDEPLIPPIIVQQVATNLDKNGVNMATLAVKLTTREELFNPNVVKTVINDKGMALYFSRAAVPFARDHFSECDDTFVASQCYLRHIGIYAYRAGFIKQYVAWQPTVLEQLESLEQLRALWYGEQIHVELAKQAPALGVDTAQDLARVRQMLSQTV.

This sequence belongs to the KdsB family.

The protein localises to the cytoplasm. It carries out the reaction 3-deoxy-alpha-D-manno-oct-2-ulosonate + CTP = CMP-3-deoxy-beta-D-manno-octulosonate + diphosphate. It functions in the pathway nucleotide-sugar biosynthesis; CMP-3-deoxy-D-manno-octulosonate biosynthesis; CMP-3-deoxy-D-manno-octulosonate from 3-deoxy-D-manno-octulosonate and CTP: step 1/1. Its pathway is bacterial outer membrane biogenesis; lipopolysaccharide biosynthesis. Activates KDO (a required 8-carbon sugar) for incorporation into bacterial lipopolysaccharide in Gram-negative bacteria. In Haemophilus ducreyi (strain 35000HP / ATCC 700724), this protein is 3-deoxy-manno-octulosonate cytidylyltransferase.